We begin with the raw amino-acid sequence, 92 residues long: 11 kDa excretory-secretory protein (92 aa).

This Trichostrongylus colubriformis (Black scour worm) protein is 11 kDa excretory-secretory protein.